Reading from the N-terminus, the 128-residue chain is Large ribosomal subunit protein bL17 (128 aa).

Belongs to the bacterial ribosomal protein bL17 family. Part of the 50S ribosomal subunit. Contacts protein L32.

The protein is Large ribosomal subunit protein bL17 of Baumannia cicadellinicola subsp. Homalodisca coagulata.